The chain runs to 337 residues: Methylthioribose-1-phosphate isomerase (337 aa).

Residues R47–A49, R81, and Q184 contribute to the substrate site. The active-site Proton donor is D225. N235–K236 is a substrate binding site.

It belongs to the eIF-2B alpha/beta/delta subunits family. MtnA subfamily.

The catalysed reaction is 5-(methylsulfanyl)-alpha-D-ribose 1-phosphate = 5-(methylsulfanyl)-D-ribulose 1-phosphate. It participates in amino-acid biosynthesis; L-methionine biosynthesis via salvage pathway; L-methionine from S-methyl-5-thio-alpha-D-ribose 1-phosphate: step 1/6. Its function is as follows. Catalyzes the interconversion of methylthioribose-1-phosphate (MTR-1-P) into methylthioribulose-1-phosphate (MTRu-1-P). This is Methylthioribose-1-phosphate isomerase from Synechococcus sp. (strain CC9605).